The chain runs to 431 residues: Enolase (431 aa).

Gln-162 contributes to the (2R)-2-phosphoglycerate binding site. Glu-204 acts as the Proton donor in catalysis. The Mg(2+) site is built by Asp-241, Glu-288, and Asp-315. Positions 340, 369, 370, and 391 each coordinate (2R)-2-phosphoglycerate. Catalysis depends on Lys-340, which acts as the Proton acceptor.

The protein belongs to the enolase family. It depends on Mg(2+) as a cofactor.

Its subcellular location is the cytoplasm. It localises to the secreted. The protein localises to the cell surface. The catalysed reaction is (2R)-2-phosphoglycerate = phosphoenolpyruvate + H2O. The protein operates within carbohydrate degradation; glycolysis; pyruvate from D-glyceraldehyde 3-phosphate: step 4/5. Functionally, catalyzes the reversible conversion of 2-phosphoglycerate (2-PG) into phosphoenolpyruvate (PEP). It is essential for the degradation of carbohydrates via glycolysis. The chain is Enolase from Phocaeicola vulgatus (strain ATCC 8482 / DSM 1447 / JCM 5826 / CCUG 4940 / NBRC 14291 / NCTC 11154) (Bacteroides vulgatus).